A 477-amino-acid polypeptide reads, in one-letter code: MALTTKPHHLQRSFLSPSRVSGERYLESAPSCLRFRRSGVQCSVVAKECRVKGVKARQIIDSRGNPTVEVDLITDDLYRSAVPSGASTGIYEALELRDGDKSVYGGKGVLQAIKNINELVAPKLIGVDVRNQADVDALMLELDGTPNKSKLGANAILGVSLSVCRAGAGAKGVPLYKHIQETSGTKELVMPVPAFNVINGGSHAGNSLAMQEFMILPVGATSFSEAFQMGSEVYHTLKGIIKTKYGQDACNVGDEGGFAPNVQDNREGLVLLIDAIEKAGYTGKIKIGMDVAASEFFMKDGRYDLNFKKQPNDGAHVLSAESLADLYREFIKDFPIVSIEDPFDQDDWSSWASLQSSVDIQLVGDDLLVTNPKRIAEAIKKQSCNALLLKVNQIGTVTESIQAALDSKAAGWGVMVSHRSGETEDNFIADLSVGLASGQIKTGAPCRSERLSKYNQLLRIEEELGNVRYAGEAFRSP.

Residues 1-41 (MALTTKPHHLQRSFLSPSRVSGERYLESAPSCLRFRRSGVQ) constitute a chloroplast transit peptide. Substrate-binding residues include histidine 203 and glutamate 212. The active-site Proton donor is glutamate 255. Mg(2+) contacts are provided by aspartate 290, glutamate 340, and aspartate 365. Glutamate 340 and aspartate 365 together coordinate substrate. Lysine 390 serves as the catalytic Proton acceptor. Residues 417–420 (SHRS) and lysine 441 each bind substrate. A Phosphoserine modification is found at serine 476.

It belongs to the enolase family. The cofactor is Mg(2+). In terms of tissue distribution, highly expressed in young roots, young siliques, and shoot apex. Lowly expressed in young leaves, stems and cotyledons.

It localises to the plastid. The protein resides in the chloroplast. The catalysed reaction is (2R)-2-phosphoglycerate = phosphoenolpyruvate + H2O. It functions in the pathway carbohydrate degradation; glycolysis; pyruvate from D-glyceraldehyde 3-phosphate: step 4/5. The protein is Enolase 1, chloroplastic (ENO1) of Arabidopsis thaliana (Mouse-ear cress).